The following is a 229-amino-acid chain: Triosephosphate isomerase (229 aa).

Residue 9–11 coordinates substrate; that stretch reads NLK. His-93 functions as the Electrophile in the catalytic mechanism. Glu-141 functions as the Proton acceptor in the catalytic mechanism. Residues Ile-146, Gly-181, and 202–203 each bind substrate; that span reads AS.

This sequence belongs to the triosephosphate isomerase family. In terms of assembly, homotetramer; dimer of dimers.

The protein resides in the cytoplasm. The catalysed reaction is D-glyceraldehyde 3-phosphate = dihydroxyacetone phosphate. It participates in carbohydrate biosynthesis; gluconeogenesis. It functions in the pathway carbohydrate degradation; glycolysis; D-glyceraldehyde 3-phosphate from glycerone phosphate: step 1/1. In terms of biological role, involved in the gluconeogenesis. Catalyzes stereospecifically the conversion of dihydroxyacetone phosphate (DHAP) to D-glyceraldehyde-3-phosphate (G3P). This chain is Triosephosphate isomerase, found in Pyrobaculum islandicum (strain DSM 4184 / JCM 9189 / GEO3).